The sequence spans 304 residues: Oxygen-dependent coproporphyrinogen-III oxidase (304 aa).

Ser-93 serves as a coordination point for substrate. 2 residues coordinate a divalent metal cation: His-97 and His-107. His-107 functions as the Proton donor in the catalytic mechanism. Residue 109–111 (NVR) participates in substrate binding. A divalent metal cation-binding residues include His-146 and His-176. The tract at residues 241-276 (YVEFNLVYDRGTLFGLQSGGRTESILMSLPPQVRWG) is important for dimerization. 259-261 (GGR) is a substrate binding site.

The protein belongs to the aerobic coproporphyrinogen-III oxidase family. Homodimer. It depends on a divalent metal cation as a cofactor.

It localises to the cytoplasm. The catalysed reaction is coproporphyrinogen III + O2 + 2 H(+) = protoporphyrinogen IX + 2 CO2 + 2 H2O. Its pathway is porphyrin-containing compound metabolism; protoporphyrin-IX biosynthesis; protoporphyrinogen-IX from coproporphyrinogen-III (O2 route): step 1/1. Involved in the heme biosynthesis. Catalyzes the aerobic oxidative decarboxylation of propionate groups of rings A and B of coproporphyrinogen-III to yield the vinyl groups in protoporphyrinogen-IX. The polypeptide is Oxygen-dependent coproporphyrinogen-III oxidase (Pseudomonas syringae pv. syringae (strain B728a)).